Consider the following 194-residue polypeptide: Peptidyl-tRNA hydrolase (194 aa).

Tyr17 is a tRNA binding site. Residue His22 is the Proton acceptor of the active site. Phe68, Asn70, and Asn116 together coordinate tRNA.

It belongs to the PTH family. Monomer.

The protein localises to the cytoplasm. The enzyme catalyses an N-acyl-L-alpha-aminoacyl-tRNA + H2O = an N-acyl-L-amino acid + a tRNA + H(+). In terms of biological role, hydrolyzes ribosome-free peptidyl-tRNAs (with 1 or more amino acids incorporated), which drop off the ribosome during protein synthesis, or as a result of ribosome stalling. Its function is as follows. Catalyzes the release of premature peptidyl moieties from peptidyl-tRNA molecules trapped in stalled 50S ribosomal subunits, and thus maintains levels of free tRNAs and 50S ribosomes. The sequence is that of Peptidyl-tRNA hydrolase from Pasteurella multocida (strain Pm70).